A 91-amino-acid polypeptide reads, in one-letter code: Soluble cytochrome b558 (91 aa).

The Cytochrome b5 heme-binding domain occupies 8-88 (LPVFTLEQVA…LQRYLIGTLE (81 aa)). C25 and C54 are oxidised to a cystine. Residues H43 and H71 each contribute to the heme site.

This is Soluble cytochrome b558 from Ectothiorhodospira shaposhnikovii (Ectothiorhodospira vacuolata).